We begin with the raw amino-acid sequence, 186 residues long: Ribosome-recycling factor (186 aa).

This sequence belongs to the RRF family.

The protein resides in the cytoplasm. Responsible for the release of ribosomes from messenger RNA at the termination of protein biosynthesis. May increase the efficiency of translation by recycling ribosomes from one round of translation to another. The sequence is that of Ribosome-recycling factor from Pelodictyon phaeoclathratiforme (strain DSM 5477 / BU-1).